The chain runs to 201 residues: Probable molybdenum cofactor guanylyltransferase (201 aa).

GTP is bound by residues 6–8 (LAG), K18, D67, and D92. D92 provides a ligand contact to Mg(2+).

Belongs to the MobA family. It depends on Mg(2+) as a cofactor.

Its subcellular location is the cytoplasm. It catalyses the reaction Mo-molybdopterin + GTP + H(+) = Mo-molybdopterin guanine dinucleotide + diphosphate. In terms of biological role, transfers a GMP moiety from GTP to Mo-molybdopterin (Mo-MPT) cofactor (Moco or molybdenum cofactor) to form Mo-molybdopterin guanine dinucleotide (Mo-MGD) cofactor. This chain is Probable molybdenum cofactor guanylyltransferase, found in Thermococcus kodakarensis (strain ATCC BAA-918 / JCM 12380 / KOD1) (Pyrococcus kodakaraensis (strain KOD1)).